Reading from the N-terminus, the 330-residue chain is Short chain dehydrogenase macD (330 aa).

NADP(+) is bound by residues K57, D86, N113, Y204, and K208. Y204 serves as the catalytic Proton donor. K208 serves as the catalytic Lowers pKa of active site Tyr.

Belongs to the short-chain dehydrogenases/reductases (SDR) family.

It functions in the pathway secondary metabolite biosynthesis; terpenoid biosynthesis. Its function is as follows. Short chain dehydrogenase; part of the gene cluster that mediates the biosynthesis of macrophorins, isoprenoid epoxycyclohexenones containing cyclized drimane moieties. The first step of the pathway is the synthesis of 6-methylsalicylic acid (6-MSA) by the polyketide synthase macA. 6-MSA is then converted to m-cresol by the decarboxylase macB. The cytochrome P450 monooxygenase macC then catalyzes the oxidation of m-cresol to toluquinol. Epoxidation of toluquinol is then performed by the short chain dehydrogenase macD, with the help of macE, and a further prenylation by macG leads to 7-deacetoxyyanuthone A. The next step is the hydroxylation of C-22 of 7-deacetoxyyanuthone A by the cytochrome P450 monooxygenase macH to yield 22-deacetylyanuthone A. O-Mevalon transferase macI then attaches mevalon to the hydroxyl group of 22-deacetylyanuthone A to produce yanuthone E. The terpene cyclase macJ catalyzes the cyclization of 22-deacetylyanuthone A to macrophorin A. MacJ is also able to catalyze cyclization of yanuthone E and 7-deacetoxyyanuthone A to their corresponding macrophorins. The macJ products can be further modified by macH and macJ, as well as by the FAD-dependent monooxygenase macF, to produce additional macrophorins, including 4'-oxomacrophorin A, 4'-oxomacrophorin D and 4'-oxomacrophorin E. In Penicillium terrestre, this protein is Short chain dehydrogenase macD.